The sequence spans 185 residues: Potassium-transporting ATPase KdpC subunit (185 aa).

Residues 14–34 (ALSLLTGVAYPLALTGIAAVI) traverse the membrane as a helical segment.

The protein belongs to the KdpC family. As to quaternary structure, the system is composed of three essential subunits: KdpA, KdpB and KdpC.

The protein resides in the cell inner membrane. Part of the high-affinity ATP-driven potassium transport (or Kdp) system, which catalyzes the hydrolysis of ATP coupled with the electrogenic transport of potassium into the cytoplasm. This subunit acts as a catalytic chaperone that increases the ATP-binding affinity of the ATP-hydrolyzing subunit KdpB by the formation of a transient KdpB/KdpC/ATP ternary complex. The protein is Potassium-transporting ATPase KdpC subunit of Cereibacter sphaeroides (strain KD131 / KCTC 12085) (Rhodobacter sphaeroides).